The primary structure comprises 285 residues: 3-methyl-2-oxobutanoate hydroxymethyltransferase (285 aa).

The disordered stretch occupies residues Met1–Arg22. Over residues Gly8–Pro21 the composition is skewed to low complexity. Mg(2+)-binding residues include Asp66 and Asp105. 3-methyl-2-oxobutanoate-binding positions include Asp66–Ser67, Asp105, and Lys135. A Mg(2+)-binding site is contributed by Glu137. Glu203 functions as the Proton acceptor in the catalytic mechanism.

The protein belongs to the PanB family. As to quaternary structure, homodecamer; pentamer of dimers. Requires Mg(2+) as cofactor.

It localises to the cytoplasm. It catalyses the reaction 3-methyl-2-oxobutanoate + (6R)-5,10-methylene-5,6,7,8-tetrahydrofolate + H2O = 2-dehydropantoate + (6S)-5,6,7,8-tetrahydrofolate. Its pathway is cofactor biosynthesis; (R)-pantothenate biosynthesis; (R)-pantoate from 3-methyl-2-oxobutanoate: step 1/2. Its function is as follows. Catalyzes the reversible reaction in which hydroxymethyl group from 5,10-methylenetetrahydrofolate is transferred onto alpha-ketoisovalerate to form ketopantoate. This chain is 3-methyl-2-oxobutanoate hydroxymethyltransferase, found in Mycolicibacterium paratuberculosis (strain ATCC BAA-968 / K-10) (Mycobacterium paratuberculosis).